A 1097-amino-acid chain; its full sequence is Protein toll (1097 aa).

A signal peptide spans 1-27 (MSRLKAASELALLVIILQLLQWPGSEA). Over 28-807 (SFGRDACSEM…ICPAEKGVFI (780 aa)) the chain is Extracellular. Cystine bridges form between cysteine 34/cysteine 45, cysteine 43/cysteine 56, and cysteine 79/cysteine 107. N-linked (GlcNAc...) asparagine glycosylation is found at asparagine 80, asparagine 140, and asparagine 175. LRR repeat units follow at residues 175-195 (NLSHLELRANIEEMPSHLFDD), 198-219 (NLESIEFGSNKLRQMPRGIFGK), 222-243 (KLKQLNLWSNQLHNLTKHDFEG), 246-267 (SVLGIDIHDNGIEQLPHDVFAH), 270-291 (NVTDINLSANLFRSLPQGLFDH), 294-314 (HLNEVRLMNNRVPLATLPSRL), 320-340 (ELQILRLRAELQSLPGDLFEH), 343-364 (QITNISLGDNLLKTLPATLLEH), 367-388 (NLLSLDLSNNRLTHLPDSLFAH), 391-412 (NLTDLRLEDNLLTGISGDIFSN), 415-436 (NLVTLVMSRNRLRTIDSRAFVS), 439-460 (GLRHLHLDHNDIDLQQPLLDIM), 474-495 (GLLTLNLRNNSIIFVYNDWKNT), 498-521 (QLRELDLSYNNISSLGYEDLAFLS), and 523-544 (NRLHVNMTHNKIRRIALPEDVH). Asparagine 235 carries an N-linked (GlcNAc...) asparagine glycan. 2 N-linked (GlcNAc...) asparagine glycosylation sites follow: asparagine 270 and asparagine 275. N-linked (GlcNAc...) asparagine glycosylation is present at asparagine 346. Residue asparagine 391 is glycosylated (N-linked (GlcNAc...) asparagine). N-linked (GlcNAc...) asparagine glycans are attached at residues asparagine 482, asparagine 508, and asparagine 528. Positions 561–620 (NPLVCDCTILWFIQLVRGVHKPQYSRQFKLRTDRLVCSQPNVLEGTPVRQIEPQTLICPL) constitute an LRRCT 1 domain. 4 disulfides stabilise this stretch: cysteine 565-cysteine 597, cysteine 567-cysteine 618, cysteine 631-cysteine 637, and cysteine 635-cysteine 650. Residues 622-663 (FSDDPRERKCPRGCNCHVRTYDKALVINCHSGNLTHVPRLPN) enclose the LRRNT domain. Residues asparagine 654, asparagine 677, asparagine 703, asparagine 715, asparagine 730, and asparagine 738 are each glycosylated (N-linked (GlcNAc...) asparagine). LRR repeat units lie at residues 669–690 (QLMELHLENNTLLRLPSANTPG), 693–713 (SVTSLHLAGNNLTSIDVDQLP), and 715–738 (NLTHLDISWNHLQMLNATVLGFLN). The LRRCT 2 domain maps to 751-801 (NPWMCDCTAKPLLLFTQDNFERIGDRNEMMCVNAEMPTRMVELSTNDICPA). 2 disulfide bridges follow: cysteine 755-cysteine 781 and cysteine 757-cysteine 799. A helical transmembrane segment spans residues 808–828 (ALAVVIALTGLLAGFTAALYY). At 829–1097 (KFQTEIKIWL…INTNAKQSDV (269 aa)) the chain is on the cytoplasmic side. The 137-residue stretch at 857–993 (KKFDAFISYS…WFWDKLRFAL (137 aa)) folds into the TIR domain.

It belongs to the Toll-like receptor family. In terms of assembly, in the absence of ligand, forms a low-affinity disulfide-linked homodimer. In the presence of ligand, crystal structures show one Tl molecule bound to a spaetzle C-106 homodimer. However, the active complex probably consists of two Tl molecules bound to a spaetzle C-106 homodimer. This is supported by in vitro experiments which also show binding of the spaetzle C-106 dimer to 2 Tl receptors. Ligand binding induces conformational changes in the extracellular domain of Tl. This may enable a secondary homodimerization interface at the C-terminus of the Tl extracellular domain. In terms of tissue distribution, in early embryos, concentrated in the pseudocleavage furrows that form transiently between nuclei before cellularization and in the cleavage furrows during cellularization (at protein level). Later, found on cells in the mesectoderm, stomodeum, proctodeum, anterior and posterior midguts, splanchnopleura, salivary gland placode and adjacent to the segmentally repeated tracheal placodes (at protein level). During and after germ band shortening, localized in a number of cell types, including the salivary gland, foregut, hindgut, Malpighian tubules and epidermis (at protein level). In embryos, high expression in M13 with comparatively low expression in M12.

It is found in the cell membrane. The protein resides in the cytoplasm. Functionally, receptor for the cleaved activated form of spz, spaetzle C-106. Binding to spaetzle C-106 activates the Toll signaling pathway and induces expression of the antifungal peptide drosomycin. Component of the extracellular signaling pathway that establishes dorsal-ventral polarity in the embryo. Promotes heterophilic cellular adhesion. Involved in synaptic targeting of motoneurons RP5 and V to muscle 12 (M12); functions as a repulsive cue inhibiting motoneuron synapse formation on muscle 13 (M13) to guide RP5 and V to the neighboring M12, where its expression is repressed by tey. May also function in embryonic neuronal survival and the synaptic targeting of SNa motoneurons. In Drosophila melanogaster (Fruit fly), this protein is Protein toll.